A 168-amino-acid chain; its full sequence is SPbeta prophage-derived uncharacterized protein YomW (168 aa).

In Bacillus subtilis (strain 168), this protein is SPbeta prophage-derived uncharacterized protein YomW (yomW).